Reading from the N-terminus, the 87-residue chain is Small ribosomal subunit protein bS20 (87 aa).

Positions 1–22 are enriched in basic residues; the sequence is MANIKSAKKRAVQSEKRRKHNA. Residues 1–27 form a disordered region; the sequence is MANIKSAKKRAVQSEKRRKHNASSRSM.

Belongs to the bacterial ribosomal protein bS20 family.

In terms of biological role, binds directly to 16S ribosomal RNA. The polypeptide is Small ribosomal subunit protein bS20 (Pectobacterium atrosepticum (strain SCRI 1043 / ATCC BAA-672) (Erwinia carotovora subsp. atroseptica)).